We begin with the raw amino-acid sequence, 244 residues long: 3-deoxy-manno-octulosonate cytidylyltransferase (244 aa).

Belongs to the KdsB family.

The protein resides in the cytoplasm. It catalyses the reaction 3-deoxy-alpha-D-manno-oct-2-ulosonate + CTP = CMP-3-deoxy-beta-D-manno-octulosonate + diphosphate. It participates in nucleotide-sugar biosynthesis; CMP-3-deoxy-D-manno-octulosonate biosynthesis; CMP-3-deoxy-D-manno-octulosonate from 3-deoxy-D-manno-octulosonate and CTP: step 1/1. It functions in the pathway bacterial outer membrane biogenesis; lipopolysaccharide biosynthesis. In terms of biological role, activates KDO (a required 8-carbon sugar) for incorporation into bacterial lipopolysaccharide in Gram-negative bacteria. The polypeptide is 3-deoxy-manno-octulosonate cytidylyltransferase (Anaeromyxobacter sp. (strain Fw109-5)).